A 202-amino-acid chain; its full sequence is NADH-quinone oxidoreductase subunit C (202 aa).

The protein belongs to the complex I 30 kDa subunit family. In terms of assembly, NDH-1 is composed of 14 different subunits. Subunits NuoB, C, D, E, F, and G constitute the peripheral sector of the complex.

The protein localises to the cell inner membrane. It carries out the reaction a quinone + NADH + 5 H(+)(in) = a quinol + NAD(+) + 4 H(+)(out). Its function is as follows. NDH-1 shuttles electrons from NADH, via FMN and iron-sulfur (Fe-S) centers, to quinones in the respiratory chain. The immediate electron acceptor for the enzyme in this species is believed to be ubiquinone. Couples the redox reaction to proton translocation (for every two electrons transferred, four hydrogen ions are translocated across the cytoplasmic membrane), and thus conserves the redox energy in a proton gradient. The polypeptide is NADH-quinone oxidoreductase subunit C (Bartonella henselae (strain ATCC 49882 / DSM 28221 / CCUG 30454 / Houston 1) (Rochalimaea henselae)).